A 624-amino-acid polypeptide reads, in one-letter code: tRNA uridine 5-carboxymethylaminomethyl modification enzyme MnmG (624 aa).

14–19 (GAGHAG) provides a ligand contact to FAD. 273–287 (GTRYCPSFEDKVVRF) serves as a coordination point for NAD(+).

Belongs to the MnmG family. As to quaternary structure, homodimer. Heterotetramer of two MnmE and two MnmG subunits. It depends on FAD as a cofactor.

The protein resides in the cytoplasm. NAD-binding protein involved in the addition of a carboxymethylaminomethyl (cmnm) group at the wobble position (U34) of certain tRNAs, forming tRNA-cmnm(5)s(2)U34. This is tRNA uridine 5-carboxymethylaminomethyl modification enzyme MnmG from Syntrophomonas wolfei subsp. wolfei (strain DSM 2245B / Goettingen).